The sequence spans 67 residues: DNA-directed RNA polymerase subunit omega (67 aa).

This sequence belongs to the RNA polymerase subunit omega family. As to quaternary structure, the RNAP catalytic core consists of 2 alpha, 1 beta, 1 beta' and 1 omega subunit. When a sigma factor is associated with the core the holoenzyme is formed, which can initiate transcription.

It carries out the reaction RNA(n) + a ribonucleoside 5'-triphosphate = RNA(n+1) + diphosphate. In terms of biological role, promotes RNA polymerase assembly. Latches the N- and C-terminal regions of the beta' subunit thereby facilitating its interaction with the beta and alpha subunits. The protein is DNA-directed RNA polymerase subunit omega of Nitrosomonas eutropha (strain DSM 101675 / C91 / Nm57).